The sequence spans 106 residues: Pyrimidine/purine nucleoside phosphorylase (106 aa).

Belongs to the nucleoside phosphorylase PpnP family.

The enzyme catalyses a purine D-ribonucleoside + phosphate = a purine nucleobase + alpha-D-ribose 1-phosphate. It catalyses the reaction adenosine + phosphate = alpha-D-ribose 1-phosphate + adenine. It carries out the reaction cytidine + phosphate = cytosine + alpha-D-ribose 1-phosphate. The catalysed reaction is guanosine + phosphate = alpha-D-ribose 1-phosphate + guanine. The enzyme catalyses inosine + phosphate = alpha-D-ribose 1-phosphate + hypoxanthine. It catalyses the reaction thymidine + phosphate = 2-deoxy-alpha-D-ribose 1-phosphate + thymine. It carries out the reaction uridine + phosphate = alpha-D-ribose 1-phosphate + uracil. The catalysed reaction is xanthosine + phosphate = alpha-D-ribose 1-phosphate + xanthine. Its function is as follows. Catalyzes the phosphorolysis of diverse nucleosides, yielding D-ribose 1-phosphate and the respective free bases. Can use uridine, adenosine, guanosine, cytidine, thymidine, inosine and xanthosine as substrates. Also catalyzes the reverse reactions. The polypeptide is Pyrimidine/purine nucleoside phosphorylase (Burkholderia multivorans (strain ATCC 17616 / 249)).